A 121-amino-acid polypeptide reads, in one-letter code: MARISGVEIPNNKRVVVSLTYIYGIGLPTAQSVLKTLNISEDIRVKDLTEEQIKNISIEISKYKTEGELRREVSLNIKRLMEIGSYRGLRHRKGLPVRGQSSKTNARTVKGPRKTVANKKK.

A disordered region spans residues 92–121; sequence RKGLPVRGQSSKTNARTVKGPRKTVANKKK. The span at 110–121 shows a compositional bias: basic residues; that stretch reads KGPRKTVANKKK.

The protein belongs to the universal ribosomal protein uS13 family. In terms of assembly, part of the 30S ribosomal subunit. Forms a loose heterodimer with protein S19. Forms two bridges to the 50S subunit in the 70S ribosome.

Located at the top of the head of the 30S subunit, it contacts several helices of the 16S rRNA. In the 70S ribosome it contacts the 23S rRNA (bridge B1a) and protein L5 of the 50S subunit (bridge B1b), connecting the 2 subunits; these bridges are implicated in subunit movement. Contacts the tRNAs in the A and P-sites. The protein is Small ribosomal subunit protein uS13 of Mycoplasma capricolum subsp. capricolum (strain California kid / ATCC 27343 / NCTC 10154).